Reading from the N-terminus, the 445-residue chain is Putative ATP-dependent RNA helicase L538 (445 aa).

Positions 14–151 (IEFMKNNRGV…AVLVNIVRGE (138 aa)) constitute a Helicase ATP-binding domain. Residue 27–34 (HSTGAGKT) participates in ATP binding. Positions 101–104 (DEAH) match the DEAH box motif. Positions 273–442 (KIEDIMKYII…VIDASIENNY (170 aa)) constitute a Helicase C-terminal domain.

This sequence belongs to the DEAD box helicase family. DEAH subfamily.

It localises to the virion. The enzyme catalyses ATP + H2O = ADP + phosphate + H(+). The chain is Putative ATP-dependent RNA helicase L538 from Acanthamoeba polyphaga mimivirus (APMV).